The primary structure comprises 193 residues: Peptidyl-tRNA hydrolase (193 aa).

Tyr-14 is a tRNA binding site. His-19 functions as the Proton acceptor in the catalytic mechanism. Residues Phe-64, Asn-66, and Asn-112 each coordinate tRNA.

This sequence belongs to the PTH family. As to quaternary structure, monomer.

Its subcellular location is the cytoplasm. It carries out the reaction an N-acyl-L-alpha-aminoacyl-tRNA + H2O = an N-acyl-L-amino acid + a tRNA + H(+). Hydrolyzes ribosome-free peptidyl-tRNAs (with 1 or more amino acids incorporated), which drop off the ribosome during protein synthesis, or as a result of ribosome stalling. In terms of biological role, catalyzes the release of premature peptidyl moieties from peptidyl-tRNA molecules trapped in stalled 50S ribosomal subunits, and thus maintains levels of free tRNAs and 50S ribosomes. This chain is Peptidyl-tRNA hydrolase, found in Bartonella quintana (strain Toulouse) (Rochalimaea quintana).